The sequence spans 172 residues: MNLFASLNQFSKNRISWLLLLLFVVFFEGAALFFQHVMMLSPCVMCIYERVAMLGVGGAALFGLIAPNNPLVRWLGLAAWGASAYKGLALSLQHVDYQFNPSPFATCDLFVTFPDWAPLNQWAPWMFEAYGDCSKIVWQFMTLSMPQWLVIIFAGNLVALAFIVIAQFFKSK.

At 1 to 16 (MNLFASLNQFSKNRIS) the chain is on the cytoplasmic side. Residues 17–33 (WLLLLLFVVFFEGAALF) form a helical membrane-spanning segment. The Periplasmic portion of the chain corresponds to 34 to 51 (FQHVMMLSPCVMCIYERV). A disulfide bridge links cysteine 43 with cysteine 46. The helical transmembrane segment at 52–67 (AMLGVGGAALFGLIAP) threads the bilayer. The Cytoplasmic segment spans residues 68 to 74 (NNPLVRW). A helical transmembrane segment spans residues 75-92 (LGLAAWGASAYKGLALSL). The Periplasmic segment spans residues 93–147 (QHVDYQFNPSPFATCDLFVTFPDWAPLNQWAPWMFEAYGDCSKIVWQFMTLSMPQ). A disulfide bond links cysteine 107 and cysteine 133. Residues 148-166 (WLVIIFAGNLVALAFIVIA) form a helical membrane-spanning segment. Residues 167–172 (QFFKSK) lie on the Cytoplasmic side of the membrane.

The protein belongs to the DsbB family.

The protein resides in the cell inner membrane. Required for disulfide bond formation in some periplasmic proteins. Acts by oxidizing the DsbA protein. The sequence is that of Disulfide bond formation protein B from Vibrio vulnificus (strain CMCP6).